The sequence spans 269 residues: GTP cyclohydrolase FolE2 1 (269 aa).

Belongs to the GTP cyclohydrolase IV family.

It catalyses the reaction GTP + H2O = 7,8-dihydroneopterin 3'-triphosphate + formate + H(+). The protein operates within cofactor biosynthesis; 7,8-dihydroneopterin triphosphate biosynthesis; 7,8-dihydroneopterin triphosphate from GTP: step 1/1. In terms of biological role, converts GTP to 7,8-dihydroneopterin triphosphate. In Burkholderia cenocepacia (strain HI2424), this protein is GTP cyclohydrolase FolE2 1.